Here is a 61-residue protein sequence, read N- to C-terminus: Small ribosomal subunit protein uS14 (61 aa).

Zn(2+) is bound by residues C24, C27, C40, and C43.

This sequence belongs to the universal ribosomal protein uS14 family. Zinc-binding uS14 subfamily. As to quaternary structure, part of the 30S ribosomal subunit. Contacts proteins S3 and S10. Zn(2+) serves as cofactor.

Its function is as follows. Binds 16S rRNA, required for the assembly of 30S particles and may also be responsible for determining the conformation of the 16S rRNA at the A site. This chain is Small ribosomal subunit protein uS14, found in Spiroplasma citri.